The following is a 108-amino-acid chain: Glutaredoxin-1 (108 aa).

Residues 3–106 (EEFVQQRLAN…DILLSIGVLR (104 aa)) form the Glutaredoxin domain. An intrachain disulfide couples Cys23 to Cys26.

The protein belongs to the glutaredoxin family.

It localises to the virion. Its function is as follows. Displays thioltransferase and dehydroascorbate reductase activities. In Cynomys gunnisoni (Gunnison's prairie dog), this protein is Glutaredoxin-1 (OPG075).